Consider the following 103-residue polypeptide: Large ribosomal subunit protein bL21 (103 aa).

The protein belongs to the bacterial ribosomal protein bL21 family. As to quaternary structure, part of the 50S ribosomal subunit. Contacts protein L20.

Functionally, this protein binds to 23S rRNA in the presence of protein L20. The chain is Large ribosomal subunit protein bL21 from Serratia proteamaculans (strain 568).